The chain runs to 350 residues: tRNA uridine(34) hydroxylase (350 aa).

Residues 146-240 (DDPDALFIDM…YARKAREQGL (95 aa)) form the Rhodanese domain. The Cysteine persulfide intermediate role is filled by Cys200.

The protein belongs to the TrhO family.

The catalysed reaction is uridine(34) in tRNA + AH2 + O2 = 5-hydroxyuridine(34) in tRNA + A + H2O. Catalyzes oxygen-dependent 5-hydroxyuridine (ho5U) modification at position 34 in tRNAs. This is tRNA uridine(34) hydroxylase from Shigella flexneri serotype 5b (strain 8401).